The primary structure comprises 273 residues: Ribosomal RNA small subunit methyltransferase A (273 aa).

Positions 18, 20, 45, 66, 91, and 113 each coordinate S-adenosyl-L-methionine.

It belongs to the class I-like SAM-binding methyltransferase superfamily. rRNA adenine N(6)-methyltransferase family. RsmA subfamily.

The protein resides in the cytoplasm. The catalysed reaction is adenosine(1518)/adenosine(1519) in 16S rRNA + 4 S-adenosyl-L-methionine = N(6)-dimethyladenosine(1518)/N(6)-dimethyladenosine(1519) in 16S rRNA + 4 S-adenosyl-L-homocysteine + 4 H(+). Functionally, specifically dimethylates two adjacent adenosines (A1518 and A1519) in the loop of a conserved hairpin near the 3'-end of 16S rRNA in the 30S particle. May play a critical role in biogenesis of 30S subunits. The polypeptide is Ribosomal RNA small subunit methyltransferase A (Shigella boydii serotype 18 (strain CDC 3083-94 / BS512)).